A 38-amino-acid chain; its full sequence is MIEPLVLGIVLGLIPITLAGLFVAAYLQYKRGNQFGLD.

Residues 5 to 25 (LVLGIVLGLIPITLAGLFVAA) traverse the membrane as a helical segment.

The protein belongs to the PetG family. As to quaternary structure, the 4 large subunits of the cytochrome b6-f complex are cytochrome b6, subunit IV (17 kDa polypeptide, PetD), cytochrome f and the Rieske protein, while the 4 small subunits are PetG, PetL, PetM and PetN. The complex functions as a dimer.

The protein resides in the cellular thylakoid membrane. In terms of biological role, component of the cytochrome b6-f complex, which mediates electron transfer between photosystem II (PSII) and photosystem I (PSI), cyclic electron flow around PSI, and state transitions. PetG is required for either the stability or assembly of the cytochrome b6-f complex. In Microcystis aeruginosa (strain NIES-843 / IAM M-2473), this protein is Cytochrome b6-f complex subunit 5.